A 313-amino-acid chain; its full sequence is Intelectin-1 (313 aa).

The first 18 residues, 1 to 18 (MNQLSFLLFLIATTRGWS), serve as a signal peptide directing secretion. The region spanning 32-255 (SSSPSLPRSC…AANALCAGMR (224 aa)) is the Fibrinogen C-terminal domain. A disulfide bond links Cys-41 and Cys-70. His-86, Glu-87, Asp-89, Gly-92, Gly-97, Asp-98, and Asp-133 together coordinate Ca(2+). Cystine bridges form between Cys-94–Cys-280, Cys-199–Cys-259, and Cys-251–Cys-265. A glycan (N-linked (GlcNAc...) asparagine) is linked at Asn-163. Ca(2+)-binding residues include Asn-260, Glu-262, Glu-274, and Asp-282. A carbohydrate is bound by residues 262–263 (EH) and Glu-274. Residue Ser-298 is the site of GPI-anchor amidated serine attachment. Positions 299–313 (SSREITEAAVLLFYR) are excised as a propeptide.

In terms of assembly, homotrimer; disulfide-linked. May interact with LTF. N-glycosylated. In terms of tissue distribution, highly expressed in omental adipose tissue where it is found in stromal vascular cells but not in fat cells but is barely detectable in subcutaneous adipose tissue (at protein level). Highly expressed in the small intestine. Also found in the heart, testis, colon, salivary gland, skeletal muscle, pancreas and thyroid and, to a lesser degree, in the uterus, spleen, prostate, lymph node and thymus.

It localises to the cell membrane. It is found in the secreted. Functionally, lectin that specifically recognizes microbial carbohydrate chains in a calcium-dependent manner. Binds to microbial glycans that contain a terminal acyclic 1,2-diol moiety, including beta-linked D-galactofuranose (beta-Galf), D-phosphoglycerol-modified glycans, D-glycero-D-talo-oct-2-ulosonic acid (KO) and 3-deoxy-D-manno-oct-2-ulosonic acid (KDO). Binds to glycans from Gram-positive and Gram-negative bacteria, including K.pneumoniae, S.pneumoniae, Y.pestis, P.mirabilis and P.vulgaris. Does not bind human glycans. Probably plays a role in the defense system against microorganisms. May function as adipokine that has no effect on basal glucose uptake but enhances insulin-stimulated glucose uptake in adipocytes. Increases AKT phosphorylation in the absence and presence of insulin. May interact with lactoferrin/LTF and increase its uptake, and may thereby play a role in iron absorption. The protein is Intelectin-1 (ITLN1) of Homo sapiens (Human).